The sequence spans 372 residues: Ribosomal RNA small subunit methyltransferase H (372 aa).

Residues 44-46 (GGH), Asp-63, Leu-97, Asp-111, and Gln-118 contribute to the S-adenosyl-L-methionine site. A compositionally biased stretch (basic and acidic residues) spans 315–334 (RAAERLDPTAEQRRRTDRER). A disordered region spans residues 315–372 (RAAERLDPTAEQRRRTDRERYRRRVRAMHQPGTGSAVRRPTPGDDGTGTDEEGEGHDS). Residues 361-372 (TGTDEEGEGHDS) are compositionally biased toward acidic residues.

It belongs to the methyltransferase superfamily. RsmH family.

It localises to the cytoplasm. It catalyses the reaction cytidine(1402) in 16S rRNA + S-adenosyl-L-methionine = N(4)-methylcytidine(1402) in 16S rRNA + S-adenosyl-L-homocysteine + H(+). Its function is as follows. Specifically methylates the N4 position of cytidine in position 1402 (C1402) of 16S rRNA. In Salinispora arenicola (strain CNS-205), this protein is Ribosomal RNA small subunit methyltransferase H.